The sequence spans 342 residues: Protein FinQ (342 aa).

Residues Arg-208–Ser-227 constitute a DNA-binding region (H-T-H motif).

Functionally, transcriptional inhibitor of the F plasmid transfer genes. FinQ may regulate a gene or genes encoded on the IncI plasmids, and coincidentally may inhibit F transfer when coresident. The polypeptide is Protein FinQ (finQ) (Escherichia coli).